We begin with the raw amino-acid sequence, 356 residues long: MSGQEKRLMVMAGGTGGHVFPGLAVAHHLMDQGWQVRWLGTADRMEADLVPKNGIEIDFIRISGLRGKGIKAQLLAPVRIFNAWRQARAIMKRFQPDVVLGMGGYVSGPGGLAAWSLGIPVVLHEQNGIAGLTNKWLAKIAKKVMQAFPGAFPHADVVGNPVRTDVLALPLPGQRLVGRQGPIRVLVVGGSQGARVLNQTMPQVAAKLGATVTIWHQSGKGGQQTVQQAYAAAGQPQHKVTEFIDDMAAAYAWADVVVCRSGALTVSEIAAAGLPALFVPFQHKDRQQYWNALPLEKAGAAKILEQPEFTVEAVASTLASWDRETLLDMAERARGASIPDATERVAEEVSAVALAR.

UDP-N-acetyl-alpha-D-glucosamine contacts are provided by residues 15 to 17 (TGG), N127, R163, S191, I244, 263 to 268 (ALTVSE), and Q288.

It belongs to the glycosyltransferase 28 family. MurG subfamily.

It is found in the cell inner membrane. The enzyme catalyses di-trans,octa-cis-undecaprenyl diphospho-N-acetyl-alpha-D-muramoyl-L-alanyl-D-glutamyl-meso-2,6-diaminopimeloyl-D-alanyl-D-alanine + UDP-N-acetyl-alpha-D-glucosamine = di-trans,octa-cis-undecaprenyl diphospho-[N-acetyl-alpha-D-glucosaminyl-(1-&gt;4)]-N-acetyl-alpha-D-muramoyl-L-alanyl-D-glutamyl-meso-2,6-diaminopimeloyl-D-alanyl-D-alanine + UDP + H(+). The protein operates within cell wall biogenesis; peptidoglycan biosynthesis. Its function is as follows. Cell wall formation. Catalyzes the transfer of a GlcNAc subunit on undecaprenyl-pyrophosphoryl-MurNAc-pentapeptide (lipid intermediate I) to form undecaprenyl-pyrophosphoryl-MurNAc-(pentapeptide)GlcNAc (lipid intermediate II). The protein is UDP-N-acetylglucosamine--N-acetylmuramyl-(pentapeptide) pyrophosphoryl-undecaprenol N-acetylglucosamine transferase of Klebsiella pneumoniae subsp. pneumoniae (strain ATCC 700721 / MGH 78578).